The following is a 192-amino-acid chain: uncharacterized protein (192 aa).

The first 18 residues, 1–18 (MNSKFILKYFILAFFLVS), serve as a signal peptide directing secretion. The N-palmitoyl cysteine moiety is linked to residue C19. The S-diacylglycerol cysteine moiety is linked to residue C19.

It is found in the cell membrane. This is an uncharacterized protein from Borreliella burgdorferi (strain ATCC 35210 / DSM 4680 / CIP 102532 / B31) (Borrelia burgdorferi).